The primary structure comprises 256 residues: DNA repair protein RecO (256 aa).

Belongs to the RecO family.

In terms of biological role, involved in DNA repair and RecF pathway recombination. This Shouchella clausii (strain KSM-K16) (Alkalihalobacillus clausii) protein is DNA repair protein RecO.